A 314-amino-acid chain; its full sequence is DNA-directed RNA polymerase subunit alpha (314 aa).

Positions 1–228 (MIEIEKPKIE…EHLNIFVGLT (228 aa)) are alpha N-terminal domain (alpha-NTD). The interval 245-314 (KEKVLEMTIE…ELGLGLRKDD (70 aa)) is alpha C-terminal domain (alpha-CTD).

This sequence belongs to the RNA polymerase alpha chain family. As to quaternary structure, homodimer. The RNAP catalytic core consists of 2 alpha, 1 beta, 1 beta' and 1 omega subunit. When a sigma factor is associated with the core the holoenzyme is formed, which can initiate transcription.

The enzyme catalyses RNA(n) + a ribonucleoside 5'-triphosphate = RNA(n+1) + diphosphate. In terms of biological role, DNA-dependent RNA polymerase catalyzes the transcription of DNA into RNA using the four ribonucleoside triphosphates as substrates. The chain is DNA-directed RNA polymerase subunit alpha from Bacillus thuringiensis (strain Al Hakam).